We begin with the raw amino-acid sequence, 422 residues long: Adenylosuccinate synthetase (422 aa).

Residues 12-18 and 40-42 contribute to the GTP site; these read GDEGKGK and GHT. The Proton acceptor role is filled by D13. Residues D13 and G40 each contribute to the Mg(2+) site. IMP contacts are provided by residues 13 to 16, 38 to 41, T129, R143, N221, T236, and R300; these read DEGK and NAGH. H41 functions as the Proton donor in the catalytic mechanism. Residue 296-302 participates in substrate binding; sequence VTTGRKR. GTP-binding positions include R302, 328 to 330, and 410 to 412; these read KLD and GVG.

The protein belongs to the adenylosuccinate synthetase family. As to quaternary structure, homodimer. The cofactor is Mg(2+).

It localises to the cytoplasm. The catalysed reaction is IMP + L-aspartate + GTP = N(6)-(1,2-dicarboxyethyl)-AMP + GDP + phosphate + 2 H(+). It functions in the pathway purine metabolism; AMP biosynthesis via de novo pathway; AMP from IMP: step 1/2. Functionally, plays an important role in the de novo pathway and in the salvage pathway of purine nucleotide biosynthesis. Catalyzes the first committed step in the biosynthesis of AMP from IMP. The sequence is that of Adenylosuccinate synthetase from Pyrenophora tritici-repentis (strain Pt-1C-BFP) (Wheat tan spot fungus).